Reading from the N-terminus, the 206-residue chain is dITP/XTP pyrophosphatase (206 aa).

A substrate-binding site is contributed by Ser-7–Lys-12. The active-site Proton acceptor is the Asp-72. A Mg(2+)-binding site is contributed by Asp-72. Substrate is bound by residues Ser-73, Phe-155–Asp-158, Lys-182, and His-187–Arg-188.

Belongs to the HAM1 NTPase family. In terms of assembly, homodimer. Mg(2+) serves as cofactor.

The enzyme catalyses XTP + H2O = XMP + diphosphate + H(+). It carries out the reaction dITP + H2O = dIMP + diphosphate + H(+). It catalyses the reaction ITP + H2O = IMP + diphosphate + H(+). Its function is as follows. Pyrophosphatase that catalyzes the hydrolysis of nucleoside triphosphates to their monophosphate derivatives, with a high preference for the non-canonical purine nucleotides XTP (xanthosine triphosphate), dITP (deoxyinosine triphosphate) and ITP. Seems to function as a house-cleaning enzyme that removes non-canonical purine nucleotides from the nucleotide pool, thus preventing their incorporation into DNA/RNA and avoiding chromosomal lesions. This Corynebacterium glutamicum (strain ATCC 13032 / DSM 20300 / JCM 1318 / BCRC 11384 / CCUG 27702 / LMG 3730 / NBRC 12168 / NCIMB 10025 / NRRL B-2784 / 534) protein is dITP/XTP pyrophosphatase.